The following is a 314-amino-acid chain: tRNA pseudouridine synthase B (314 aa).

His43 lines the substrate pocket. Asp48 serves as the catalytic Nucleophile. Residues Tyr76, Tyr179, and Leu200 each coordinate substrate.

The protein belongs to the pseudouridine synthase TruB family. Type 1 subfamily.

The enzyme catalyses uridine(55) in tRNA = pseudouridine(55) in tRNA. Responsible for synthesis of pseudouridine from uracil-55 in the psi GC loop of transfer RNAs. This chain is tRNA pseudouridine synthase B, found in Cronobacter sakazakii (strain ATCC BAA-894) (Enterobacter sakazakii).